Consider the following 187-residue polypeptide: Probable cobalt-precorrin-6B C(15)-methyltransferase (decarboxylating) (187 aa).

S-adenosyl-L-methionine contacts are provided by residues threonine 17, 41–45 (GCGTG), aspartate 62, and glycine 91.

It belongs to the methyltransferase superfamily. Archaeal-type CbiT family.

It catalyses the reaction Co-precorrin-6B + S-adenosyl-L-methionine = Co-precorrin-7 + S-adenosyl-L-homocysteine + CO2. The protein operates within cofactor biosynthesis; adenosylcobalamin biosynthesis; cob(II)yrinate a,c-diamide from sirohydrochlorin (anaerobic route): step 8/10. In terms of biological role, catalyzes the methylation of C-15 in cobalt-precorrin-6B followed by the decarboxylation of C-12 to form cobalt-precorrin-7. This chain is Probable cobalt-precorrin-6B C(15)-methyltransferase (decarboxylating), found in Methanobrevibacter smithii (strain ATCC 35061 / DSM 861 / OCM 144 / PS).